The sequence spans 210 residues: MIGIYGGTFDPVHYGHLRAALEVREDLELRELRFLPCHQPPHRPPPVADPQTRLRMLEIALADADGGFALDTRELDRGGPSYMVDTLSSIRKETGDEPLCLIVGLDAFLALPAWHRWRRLFSLAHIVVLQRPDYDIEYAEDLKHCVEERQVTDPTQLAAQPDGMIYFLEVTQLAIASTSIRRMLREGRSAKYLLPDAVLELIHRESLYAK.

This sequence belongs to the NadD family.

It carries out the reaction nicotinate beta-D-ribonucleotide + ATP + H(+) = deamido-NAD(+) + diphosphate. Its pathway is cofactor biosynthesis; NAD(+) biosynthesis; deamido-NAD(+) from nicotinate D-ribonucleotide: step 1/1. Functionally, catalyzes the reversible adenylation of nicotinate mononucleotide (NaMN) to nicotinic acid adenine dinucleotide (NaAD). The polypeptide is Probable nicotinate-nucleotide adenylyltransferase (Methylococcus capsulatus (strain ATCC 33009 / NCIMB 11132 / Bath)).